The primary structure comprises 129 residues: Small ribosomal subunit protein uS11 (129 aa).

In terms of assembly, part of the 30S ribosomal subunit. Interacts with proteins S7 and S18. Binds to IF-3. May be methylated on an undetermined residue.

Functionally, located on the platform of the 30S subunit, it bridges several disparate RNA helices of the 16S rRNA. Forms part of the Shine-Dalgarno cleft in the 70S ribosome. The chain is Small ribosomal subunit protein uS11 from Rhodopseudomonas palustris (strain ATCC BAA-98 / CGA009).